The primary structure comprises 200 residues: Small ribosomal subunit protein uS4 (200 aa).

Residues 22 to 42 are disordered; it reads TGKELEKRPYAPGPHGPNQRK. The S4 RNA-binding domain occupies 92–152; that stretch reads ARLDNLVYRM…EKSNNLVVVK (61 aa).

This sequence belongs to the universal ribosomal protein uS4 family. As to quaternary structure, part of the 30S ribosomal subunit. Contacts protein S5. The interaction surface between S4 and S5 is involved in control of translational fidelity.

Functionally, one of the primary rRNA binding proteins, it binds directly to 16S rRNA where it nucleates assembly of the body of the 30S subunit. With S5 and S12 plays an important role in translational accuracy. In Bacillus cereus (strain Q1), this protein is Small ribosomal subunit protein uS4.